We begin with the raw amino-acid sequence, 622 residues long: Coiled-coil domain-containing protein 17 (622 aa).

3 coiled-coil regions span residues 81 to 102 (RSAL…QEMR), 146 to 207 (ARRV…LEVL), and 294 to 320 (GELP…RGRA). Disordered stretches follow at residues 334 to 356 (SLQP…PLPP) and 584 to 622 (PAVG…PVSF). Positions 344 to 356 (PLLPPPVAPPLPP) are enriched in pro residues. The segment covering 593-615 (PRTEEPLSGVKDRDEGLGPHHSS) has biased composition (basic and acidic residues).

The chain is Coiled-coil domain-containing protein 17 (CCDC17) from Homo sapiens (Human).